Consider the following 152-residue polypeptide: MALSTLEQKLTEMITAPVEALGFELVGIEFIRGRQSTLRIYINSDEGITVDDCADVSHQVSAVLDVEDPISVAYSLEVSSPGLDRPLFTAAHYRQFIGSDVSVVLRIAVQNRRKWQGIIKAVDGEMITVTVDGKDEVFALQNIQKANLVPHF.

This sequence belongs to the RimP family.

It is found in the cytoplasm. Its function is as follows. Required for maturation of 30S ribosomal subunits. In Sodalis glossinidius (strain morsitans), this protein is Ribosome maturation factor RimP.